A 662-amino-acid polypeptide reads, in one-letter code: PAN2-PAN3 deadenylation complex subunit PAN3 (662 aa).

2 disordered regions span residues 1–29 (MASA…NAKD) and 53–133 (DPHK…DTVT). Residues 26–55 (NAKDTLCRNITIYGRCRYEDKGCAFNHDPH) form a C3H1-type zinc finger. Residues 75-102 (SFTPSLLSSNGSSPTSTPATTKKMTTIS) are compositionally biased toward low complexity. Polar residues predominate over residues 115–133 (SVVSRSNASTPGLRQDTVT). Residues 263–525 (QTLPNTQLPA…NIDVFITGIS (263 aa)) are pseudokinase domain. ATP is bound by residues arginine 315, 364 to 371 (DYHPLSKT), and 425 to 426 (SK). The stretch at 526–564 (SQLMSTFDSALHLDDQLTSDLSRELENGRLVRLMAKLNF) forms a coiled coil. A knob domain region spans residues 565 to 662 (VNERPEYEHD…ALMKPARRMH (98 aa)).

The protein belongs to the protein kinase superfamily. PAN3 family. In terms of assembly, homodimer. Forms a heterotrimer with a catalytic subunit pan2 to form the poly(A)-nuclease (PAN) deadenylation complex. Interacts (via PAM-2 motif) with poly(A)-binding protein pab1 (via PABC domain), conferring substrate specificity of the enzyme complex.

It localises to the cytoplasm. In terms of biological role, regulatory subunit of the poly(A)-nuclease (PAN) deadenylation complex, one of two cytoplasmic mRNA deadenylases involved in mRNA turnover. PAN specifically shortens poly(A) tails of RNA and the activity is stimulated by poly(A)-binding protein pab1. PAN deadenylation is followed by rapid degradation of the shortened mRNA tails by the CCR4-NOT complex. Deadenylated mRNAs are then degraded by two alternative mechanisms, namely exosome-mediated 3'-5' exonucleolytic degradation, or deadenylation-dependent mRNA decaping and subsequent 5'-3' exonucleolytic degradation by xrn1. May also be involved in post-transcriptional maturation of mRNA poly(A) tails. pan3 acts as a positive regulator for PAN activity, recruiting the catalytic subunit pan2 to mRNA via its interaction with RNA and with pab1. The protein is PAN2-PAN3 deadenylation complex subunit PAN3 of Aspergillus fumigatus (strain ATCC MYA-4609 / CBS 101355 / FGSC A1100 / Af293) (Neosartorya fumigata).